We begin with the raw amino-acid sequence, 417 residues long: Aminoacyltransferase FemB (417 aa).

This sequence belongs to the FemABX family.

The protein resides in the cytoplasm. The catalysed reaction is MurNAc-L-Ala-D-isoglutaminyl-L-Lys-(N(6)-tri-Gly)-D-Ala-D-Ala-diphospho-di-trans,octa-cis-undecaprenyl-GlcNAc + 2 glycyl-tRNA(Gly) = MurNAc-L-Ala-D-isoglutaminyl-L-Lys-(N(6)-penta-Gly)-D-Ala-D-Ala-diphospho-di-trans,octa-cis-undecaprenyl-GlcNAc + 2 tRNA(Gly) + 2 H(+). Functionally, catalyzes the incorporation of amino acid(s) into the interchain peptide bridge of peptidoglycan, using aminoacyl-tRNA as amino acid donor. This chain is Aminoacyltransferase FemB (femB), found in Staphylococcus epidermidis (strain ATCC 12228 / FDA PCI 1200).